A 360-amino-acid polypeptide reads, in one-letter code: Phospho-N-acetylmuramoyl-pentapeptide-transferase (360 aa).

Transmembrane regions (helical) follow at residues 25–45 (RGIL…PWMI), 73–93 (TMGG…WADL), 97–117 (YVWV…VDDY), 142–162 (IGAA…TLIV), 167–187 (SVEI…IVGS), 199–219 (GLAI…CYLS), 236–256 (AGEL…FLWF), 263–283 (VFMG…IAVI), 288–308 (IVLF…MIQV), and 338–358 (VIVR…ATLK).

The protein belongs to the glycosyltransferase 4 family. MraY subfamily. Requires Mg(2+) as cofactor.

Its subcellular location is the cell inner membrane. The enzyme catalyses UDP-N-acetyl-alpha-D-muramoyl-L-alanyl-gamma-D-glutamyl-meso-2,6-diaminopimeloyl-D-alanyl-D-alanine + di-trans,octa-cis-undecaprenyl phosphate = di-trans,octa-cis-undecaprenyl diphospho-N-acetyl-alpha-D-muramoyl-L-alanyl-D-glutamyl-meso-2,6-diaminopimeloyl-D-alanyl-D-alanine + UMP. The protein operates within cell wall biogenesis; peptidoglycan biosynthesis. Catalyzes the initial step of the lipid cycle reactions in the biosynthesis of the cell wall peptidoglycan: transfers peptidoglycan precursor phospho-MurNAc-pentapeptide from UDP-MurNAc-pentapeptide onto the lipid carrier undecaprenyl phosphate, yielding undecaprenyl-pyrophosphoryl-MurNAc-pentapeptide, known as lipid I. In Pseudomonas aeruginosa (strain LESB58), this protein is Phospho-N-acetylmuramoyl-pentapeptide-transferase.